The primary structure comprises 114 residues: Fumarate reductase subunit D (114 aa).

3 helical membrane passes run 25-45 (SGLA…FGII), 50-70 (IIAF…TIFP), and 94-114 (LIFY…VIAI).

The protein belongs to the FrdD family. In terms of assembly, part of an enzyme complex containing four subunits: a flavoprotein (FrdA), an iron-sulfur protein (FrdB), and two hydrophobic anchor proteins (FrdC and FrdD).

It localises to the cell inner membrane. Functionally, anchors the catalytic components of the fumarate reductase complex to the cell membrane, binds quinones. The sequence is that of Fumarate reductase subunit D from Mannheimia succiniciproducens (strain KCTC 0769BP / MBEL55E).